The sequence spans 194 residues: Elongation factor P (194 aa).

The protein belongs to the elongation factor P family.

Its subcellular location is the cytoplasm. Its pathway is protein biosynthesis; polypeptide chain elongation. Its function is as follows. Involved in peptide bond synthesis. Stimulates efficient translation and peptide-bond synthesis on native or reconstituted 70S ribosomes in vitro. Probably functions indirectly by altering the affinity of the ribosome for aminoacyl-tRNA, thus increasing their reactivity as acceptors for peptidyl transferase. In Hydrogenobaculum sp. (strain Y04AAS1), this protein is Elongation factor P.